A 294-amino-acid chain; its full sequence is Acetylglutamate kinase (294 aa).

Residues 63-64, arginine 85, and asparagine 188 contribute to the substrate site; that span reads GG.

Belongs to the acetylglutamate kinase family. ArgB subfamily.

It is found in the cytoplasm. The enzyme catalyses N-acetyl-L-glutamate + ATP = N-acetyl-L-glutamyl 5-phosphate + ADP. It functions in the pathway amino-acid biosynthesis; L-arginine biosynthesis; N(2)-acetyl-L-ornithine from L-glutamate: step 2/4. Catalyzes the ATP-dependent phosphorylation of N-acetyl-L-glutamate. The polypeptide is Acetylglutamate kinase (Methanococcus maripaludis (strain C5 / ATCC BAA-1333)).